Here is a 207-residue protein sequence, read N- to C-terminus: Hemin/hemoglobin-binding protein 1 (207 aa).

Residues 1–27 (MKKVLVFAAFIVLFSFSFLSTGLTAQA) form the signal peptide. The 120-residue stretch at 29–148 (LKDGTYSVDY…RFDEGSAKAL (120 aa)) folds into the NEAT domain. The disordered stretch occupies residues 151-178 (AVKSSDNNTTTPATKSDSSNKVTNPKSS). Residues 154-178 (SSDNNTTTPATKSDSSNKVTNPKSS) show a composition bias toward polar residues. Positions 174–178 (NPKSS) match the NPKXZ sorting signal motif. Ser-177 carries the murein peptidoglycan amidated serine modification. Residues 178 to 207 (SDSSQMFLYGIIFVATGAGLILLKRRAIFK) constitute a propeptide, removed by sortase B.

The protein localises to the secreted. It localises to the cell wall. Its function is as follows. Binds both host hemin and hemoglobin with affinity in the nanomolar range and presumably directs it to membrane transporters. The polypeptide is Hemin/hemoglobin-binding protein 1 (Listeria monocytogenes serovar 1/2a (strain ATCC BAA-679 / EGD-e)).